The chain runs to 256 residues: MSNLAQFDSDFYQSNFTIDNQEQSGNDSNAYGNLYGSRKQQAGEQPQPASFVPSEMLMSSGYAGQFFQPASNSDYYSQSPYIDSFDEEPPLLEELGIHFDHIWQKTLTVLNPMKPVDGSIMNETDLTGPILFCVALGATLLLAGKVQFGYVYGMSAIGCLVIHALLNLMSSSGVSYGCVASVLGYCLLPMVILSGCAMFFSLQGIFGIMSSLVIIGWCSLSASKIFIAALHMEGQQLLVAYPCAILYGLFALLTIF.

At 1–125 (MSNLAQFDSD…VDGSIMNETD (125 aa)) the chain is on the cytoplasmic side. 2 stretches are compositionally biased toward polar residues: residues 18 to 31 (IDNQ…SNAY) and 38 to 48 (RKQQAGEQPQP). The disordered stretch occupies residues 18 to 48 (IDNQEQSGNDSNAYGNLYGSRKQQAGEQPQP). Residues 126–146 (LTGPILFCVALGATLLLAGKV) traverse the membrane as a helical segment. A topological domain (extracellular) is located at residue Q147. The chain crosses the membrane as a helical span at residues 148 to 168 (FGYVYGMSAIGCLVIHALLNL). Topologically, residues 169–172 (MSSS) are cytoplasmic. The helical transmembrane segment at 173–193 (GVSYGCVASVLGYCLLPMVIL) threads the bilayer. Topologically, residues 194-196 (SGC) are extracellular. A helical membrane pass occupies residues 197-217 (AMFFSLQGIFGIMSSLVIIGW). Topologically, residues 218-235 (CSLSASKIFIAALHMEGQ) are cytoplasmic. The helical transmembrane segment at 236 to 256 (QLLVAYPCAILYGLFALLTIF) threads the bilayer.

The protein belongs to the YIP1 family.

It localises to the endoplasmic reticulum membrane. Its subcellular location is the golgi apparatus. The protein localises to the cis-Golgi network membrane. The protein resides in the trans-Golgi network membrane. The sequence is that of Protein YIPF7 (YIPF7) from Homo sapiens (Human).